The following is a 381-amino-acid chain: Putative glutamate--cysteine ligase 2 (381 aa).

Belongs to the glutamate--cysteine ligase type 2 family. YbdK subfamily.

It catalyses the reaction L-cysteine + L-glutamate + ATP = gamma-L-glutamyl-L-cysteine + ADP + phosphate + H(+). In terms of biological role, ATP-dependent carboxylate-amine ligase which exhibits weak glutamate--cysteine ligase activity. This chain is Putative glutamate--cysteine ligase 2, found in Polaromonas naphthalenivorans (strain CJ2).